The following is a 191-amino-acid chain: Ribosomal RNA large subunit methyltransferase E (191 aa).

Positions 49, 51, 66, 82, and 105 each coordinate S-adenosyl-L-methionine. The active-site Proton acceptor is the lysine 145.

Belongs to the class I-like SAM-binding methyltransferase superfamily. RNA methyltransferase RlmE family.

It is found in the cytoplasm. The catalysed reaction is uridine(2552) in 23S rRNA + S-adenosyl-L-methionine = 2'-O-methyluridine(2552) in 23S rRNA + S-adenosyl-L-homocysteine + H(+). Its function is as follows. Specifically methylates the uridine in position 2552 of 23S rRNA at the 2'-O position of the ribose in the fully assembled 50S ribosomal subunit. This is Ribosomal RNA large subunit methyltransferase E from Archaeoglobus fulgidus (strain ATCC 49558 / DSM 4304 / JCM 9628 / NBRC 100126 / VC-16).